A 140-amino-acid polypeptide reads, in one-letter code: Small ribosomal subunit protein bS6 (140 aa).

Residues 96 to 140 (VTGQSEMLKAEENRSERRERRERPENAESNDGDDSDSNDSDNADE) are disordered. Basic and acidic residues predominate over residues 103–121 (LKAEENRSERRERRERPEN). The segment covering 123–140 (ESNDGDDSDSNDSDNADE) has biased composition (acidic residues).

Belongs to the bacterial ribosomal protein bS6 family.

Its function is as follows. Binds together with bS18 to 16S ribosomal RNA. In Ectopseudomonas mendocina (strain ymp) (Pseudomonas mendocina), this protein is Small ribosomal subunit protein bS6.